Reading from the N-terminus, the 780-residue chain is Subtilisin-like protease SBT5.1 (780 aa).

The N-terminal stretch at 1–25 is a signal peptide; the sequence is MMRCLTITIMFFMFFFLSVIQKCKS. Residues 26-106 constitute a propeptide, activation peptide; the sequence is ETSKSGDYII…VFPDQMLQLH (81 aa). Residues 33–106 form the Inhibitor I9 domain; it reads YIIYMGAASS…VFPDQMLQLH (74 aa). Residues 110–617 enclose the Peptidase S8 domain; sequence SWDFLVQESY…AGQVTIFGPS (508 aa). The active-site Charge relay system is the aspartate 147. An N-linked (GlcNAc...) asparagine glycan is attached at asparagine 197. Catalysis depends on histidine 215, which acts as the Charge relay system. The N-linked (GlcNAc...) asparagine glycan is linked to asparagine 230. A PA domain is found at 385–469; that stretch reads IDANEEAARN…PEDGIQIMSY (85 aa). N-linked (GlcNAc...) asparagine glycosylation occurs at asparagine 471. Serine 550 (charge relay system) is an active-site residue. N-linked (GlcNAc...) asparagine glycosylation occurs at asparagine 776.

Belongs to the peptidase S8 family.

The protein localises to the secreted. This is Subtilisin-like protease SBT5.1 from Arabidopsis thaliana (Mouse-ear cress).